Reading from the N-terminus, the 606-residue chain is Glutamine--fructose-6-phosphate aminotransferase [isomerizing] (606 aa).

Cys2 serves as the catalytic Nucleophile; for GATase activity. The 216-residue stretch at 2–217 (CGIIGIVGKE…EGDYVALDHD (216 aa)) folds into the Glutamine amidotransferase type-2 domain. SIS domains lie at 280–421 (VPGD…ARGT) and 454–596 (IAAD…VDQP). The active-site For Fru-6P isomerization activity is the Lys601.

Homodimer.

It is found in the cytoplasm. It catalyses the reaction D-fructose 6-phosphate + L-glutamine = D-glucosamine 6-phosphate + L-glutamate. Catalyzes the first step in hexosamine metabolism, converting fructose-6P into glucosamine-6P using glutamine as a nitrogen source. The chain is Glutamine--fructose-6-phosphate aminotransferase [isomerizing] from Caulobacter vibrioides (strain ATCC 19089 / CIP 103742 / CB 15) (Caulobacter crescentus).